We begin with the raw amino-acid sequence, 265 residues long: MAVLYAGRPVQKCERSRLMFNIDQPDSAPDNEDHDGDVVMHGQGSFFGRRKGHKLRAHQADLIENLLPHLSLQIDSPAPEPLTTLFDPPVEHMRLEIGFGGGEHLIAEALAHPDTGFIGAEPYVNGMAKILARIEAENIRNIRLFAGDASELLAWVPAGSLARIDLIHPDPWPKRRHWKRRFVQDATVAAMARALTPHGEFRFVCDIDGYTAWTLAHLLRAPCFDWLAQRADDWRKPWPNYTMTRYGRKAEREGRRANYLRFERL.

The S-adenosyl-L-methionine site is built by E96, E121, D148, and D170. D170 is a catalytic residue. Residues K174 and D206 each contribute to the substrate site.

Belongs to the class I-like SAM-binding methyltransferase superfamily. TrmB family.

It catalyses the reaction guanosine(46) in tRNA + S-adenosyl-L-methionine = N(7)-methylguanosine(46) in tRNA + S-adenosyl-L-homocysteine. The protein operates within tRNA modification; N(7)-methylguanine-tRNA biosynthesis. Functionally, catalyzes the formation of N(7)-methylguanine at position 46 (m7G46) in tRNA. This chain is tRNA (guanine-N(7)-)-methyltransferase, found in Rhodopseudomonas palustris (strain ATCC BAA-98 / CGA009).